The primary structure comprises 400 residues: S-adenosylmethionine synthase (400 aa).

Position 17 (His17) interacts with ATP. Asp19 provides a ligand contact to Mg(2+). Glu45 is a binding site for K(+). L-methionine contacts are provided by Glu58 and Gln101. The flexible loop stretch occupies residues 101–111; sequence QSADIAMGVDQ. Residues 177 to 179, 244 to 245, Asp253, 259 to 260, Ala276, and Lys280 each bind ATP; these read DGK, RF, and RK. Residue Asp253 participates in L-methionine binding. Lys284 is an L-methionine binding site.

This sequence belongs to the AdoMet synthase family. In terms of assembly, homotetramer; dimer of dimers. Requires Mg(2+) as cofactor. K(+) is required as a cofactor.

It is found in the cytoplasm. It carries out the reaction L-methionine + ATP + H2O = S-adenosyl-L-methionine + phosphate + diphosphate. It participates in amino-acid biosynthesis; S-adenosyl-L-methionine biosynthesis; S-adenosyl-L-methionine from L-methionine: step 1/1. In terms of biological role, catalyzes the formation of S-adenosylmethionine (AdoMet) from methionine and ATP. The overall synthetic reaction is composed of two sequential steps, AdoMet formation and the subsequent tripolyphosphate hydrolysis which occurs prior to release of AdoMet from the enzyme. The protein is S-adenosylmethionine synthase of Bacillus subtilis (strain 168).